A 566-amino-acid chain; its full sequence is Endoglucanase B (566 aa).

Residues 1–30 (MKKRRSSKVILSLAIVVALLAAVEPNAALA) form the signal peptide. The active-site Proton donor is the E177. E299 functions as the Nucleophile in the catalytic mechanism.

It belongs to the glycosyl hydrolase 5 (cellulase A) family.

The enzyme catalyses Endohydrolysis of (1-&gt;4)-beta-D-glucosidic linkages in cellulose, lichenin and cereal beta-D-glucans.. The polypeptide is Endoglucanase B (celB) (Paenibacillus lautus (Bacillus lautus)).